A 159-amino-acid polypeptide reads, in one-letter code: RNA pyrophosphohydrolase (159 aa).

One can recognise a Nudix hydrolase domain in the interval 6-149; that stretch reads GYRPNVGIVI…KRNVYRRMMK (144 aa). The short motif at 38–59 is the Nudix box element; sequence GGINSGETAEQAMFRELFEEVG.

It belongs to the Nudix hydrolase family. RppH subfamily. Requires a divalent metal cation as cofactor.

In terms of biological role, accelerates the degradation of transcripts by removing pyrophosphate from the 5'-end of triphosphorylated RNA, leading to a more labile monophosphorylated state that can stimulate subsequent ribonuclease cleavage. This is RNA pyrophosphohydrolase from Baumannia cicadellinicola subsp. Homalodisca coagulata.